The following is a 105-amino-acid chain: 3-phenylpropionate/cinnamic acid dioxygenase ferredoxin subunit (105 aa).

The Rieske domain occupies 4 to 99 (LFVCTVEELP…VVVKDGNIYI (96 aa)). The [2Fe-2S] cluster site is built by Cys42, His44, Cys62, and His65.

This sequence belongs to the bacterial ring-hydroxylating dioxygenase ferredoxin component family. In terms of assembly, this dioxygenase system consists of four proteins: the two subunits of the hydroxylase component (HcaE and HcaF), a ferredoxin (HcaC) and a ferredoxin reductase (HcaD). It depends on [2Fe-2S] cluster as a cofactor.

It participates in aromatic compound metabolism; 3-phenylpropanoate degradation. Functionally, part of the multicomponent 3-phenylpropionate dioxygenase, that converts 3-phenylpropionic acid (PP) and cinnamic acid (CI) into 3-phenylpropionate-dihydrodiol (PP-dihydrodiol) and cinnamic acid-dihydrodiol (CI-dihydrodiol), respectively. This protein seems to be a 2Fe-2S ferredoxin. In Photorhabdus laumondii subsp. laumondii (strain DSM 15139 / CIP 105565 / TT01) (Photorhabdus luminescens subsp. laumondii), this protein is 3-phenylpropionate/cinnamic acid dioxygenase ferredoxin subunit.